The sequence spans 176 residues: Ribosome maturation factor RimM (176 aa).

Positions 103–176 constitute a PRC barrel domain; the sequence is QNDEYYFYEI…KIVVKELEWI (74 aa).

Belongs to the RimM family. Binds ribosomal protein uS19.

It localises to the cytoplasm. In terms of biological role, an accessory protein needed during the final step in the assembly of 30S ribosomal subunit, possibly for assembly of the head region. Essential for efficient processing of 16S rRNA. May be needed both before and after RbfA during the maturation of 16S rRNA. It has affinity for free ribosomal 30S subunits but not for 70S ribosomes. In Thermotoga neapolitana (strain ATCC 49049 / DSM 4359 / NBRC 107923 / NS-E), this protein is Ribosome maturation factor RimM.